Reading from the N-terminus, the 357-residue chain is Thymidine kinase (357 aa).

ATP is bound at residue 17–24 (GAHGLGKT). The active-site Proton acceptor is the Glu-45. Arg-186 contributes to the ATP binding site. Residue Arg-192 participates in substrate binding.

This sequence belongs to the herpesviridae thymidine kinase family. In terms of assembly, homodimer.

It catalyses the reaction thymidine + ATP = dTMP + ADP + H(+). Functionally, catalyzes the transfer of the gamma-phospho group of ATP to thymidine to generate dTMP in the salvage pathway of pyrimidine synthesis. The dTMP serves as a substrate for DNA polymerase during viral DNA replication. Allows the virus to be reactivated and to grow in non-proliferative cells lacking a high concentration of phosphorylated nucleic acid precursors. This Bovine herpesvirus 1 (strain 6660) (BoHV-1) protein is Thymidine kinase.